A 220-amino-acid polypeptide reads, in one-letter code: Deoxyribose-phosphate aldolase (220 aa).

The Proton donor/acceptor role is filled by Asp-89. The Schiff-base intermediate with acetaldehyde role is filled by Lys-151. The Proton donor/acceptor role is filled by Lys-180.

This sequence belongs to the DeoC/FbaB aldolase family. DeoC type 1 subfamily.

The protein localises to the cytoplasm. The enzyme catalyses 2-deoxy-D-ribose 5-phosphate = D-glyceraldehyde 3-phosphate + acetaldehyde. It participates in carbohydrate degradation; 2-deoxy-D-ribose 1-phosphate degradation; D-glyceraldehyde 3-phosphate and acetaldehyde from 2-deoxy-alpha-D-ribose 1-phosphate: step 2/2. Functionally, catalyzes a reversible aldol reaction between acetaldehyde and D-glyceraldehyde 3-phosphate to generate 2-deoxy-D-ribose 5-phosphate. The polypeptide is Deoxyribose-phosphate aldolase (Streptococcus pneumoniae (strain Taiwan19F-14)).